The chain runs to 518 residues: Probable cyclic di-GMP phosphodiesterase PdeN (518 aa).

The next 2 helical transmembrane spans lie at 16–36 and 236–256; these read CIVA…LVAW and VWYA…LCYY. The EAL domain occupies 261-514; that stretch reads RMRPGREIMT…DFVRWLKKPY (254 aa).

The protein localises to the cell inner membrane. The enzyme catalyses 3',3'-c-di-GMP + H2O = 5'-phosphoguanylyl(3'-&gt;5')guanosine + H(+). Phosphodiesterase (PDE) that catalyzes the hydrolysis of cyclic-di-GMP (c-di-GMP) to 5'-pGpG. The chain is Probable cyclic di-GMP phosphodiesterase PdeN from Escherichia coli (strain K12).